The primary structure comprises 236 residues: MKLEIINSQIEAGQKGLQIFKQAIQQGAQVFGLATGSTPISIYDAITQSDLDFTKFISINLDEYKGLANNHPESYHYFMNKYFFSKKPFAHSYMPNGLADDLKSETKHYDQIIEENPIDLQILGIGRNGHIGFNEPGTSFNSQTHIVNLTDNTIQANSRFFDSIDQVPKQAVSMGIASIMKSKEILIAAYGKEKAQAVKEFIEGPVTEDVPASILQKHPKVTVILDQAAAALLSKK.

Asp62 functions as the Proton acceptor; for enolization step in the catalytic mechanism. Asn128 acts as the For ring-opening step in catalysis. The active-site Proton acceptor; for ring-opening step is the His130. The active-site For ring-opening step is Glu135.

Belongs to the glucosamine/galactosamine-6-phosphate isomerase family. NagB subfamily.

It carries out the reaction alpha-D-glucosamine 6-phosphate + H2O = beta-D-fructose 6-phosphate + NH4(+). The protein operates within amino-sugar metabolism; N-acetylneuraminate degradation; D-fructose 6-phosphate from N-acetylneuraminate: step 5/5. Functionally, catalyzes the reversible isomerization-deamination of glucosamine 6-phosphate (GlcN6P) to form fructose 6-phosphate (Fru6P) and ammonium ion. In Oenococcus oeni (strain ATCC BAA-331 / PSU-1), this protein is Glucosamine-6-phosphate deaminase.